A 197-amino-acid polypeptide reads, in one-letter code: Probable nicotinate-nucleotide adenylyltransferase (197 aa).

This sequence belongs to the NadD family.

The catalysed reaction is nicotinate beta-D-ribonucleotide + ATP + H(+) = deamido-NAD(+) + diphosphate. The protein operates within cofactor biosynthesis; NAD(+) biosynthesis; deamido-NAD(+) from nicotinate D-ribonucleotide: step 1/1. Its function is as follows. Catalyzes the reversible adenylation of nicotinate mononucleotide (NaMN) to nicotinic acid adenine dinucleotide (NaAD). This chain is Probable nicotinate-nucleotide adenylyltransferase, found in Bordetella pertussis (strain Tohama I / ATCC BAA-589 / NCTC 13251).